The following is a 557-amino-acid chain: Tektin-5 (557 aa).

Residues 302-386 are a coiled coil; it reads DNIRHAQNMR…LLERAIVAKE (85 aa). 6 repeat units span residues 507–512, 513–518, 519–524, 525–530, 531–536, and 537–541. A 6 X 6 AA approximate tandem repeats of C-[GSK]-G-[GSPH]-A-[SLP] region spans residues 507-541; the sequence is CSGSALCKGPASCGGGASCGGGASCGGHAPCGSAL.

It belongs to the tektin family. As to quaternary structure, microtubule inner protein component of sperm flagellar doublet microtubules. Interacts with TEKT3. In terms of processing, ubiquitinated, leading to its degradation. Deubiquitinated by USP16, promoting its stability. In terms of tissue distribution, strongly expressed in germ cells of the testis (at protein level). Expressed in spermatozoa. Also detected in brain.

It localises to the cytoplasm. The protein resides in the cytoskeleton. Its subcellular location is the flagellum axoneme. Its function is as follows. Sperm-specific microtubule inner protein (MIP) part of the dynein-decorated doublet microtubules (DMTs) in flagellar axoneme. Forms an extensive interaction network in different conformations that reinforces the helix bundle composed by other tektin proteins (TEKT1 to TEKT4) and MIPs to anchor the tektin bundle onto the tubulin wall of A-tubule of the sperm flagellum. The protein is Tektin-5 of Mus musculus (Mouse).